A 142-amino-acid chain; its full sequence is Coactosin-like protein (142 aa).

A2 carries the N-acetylalanine modification. The region spanning 2-130 (ATKIDKEACR…EEDFIKNELK (129 aa)) is the ADF-H domain. A flexible and important for F-actin binding region spans residues 66–75 (TGDAMSKRSK). 2 positions are modified to N6-acetyllysine: K102 and K126.

It belongs to the actin-binding proteins ADF family. Coactosin subfamily. In terms of assembly, interacts with 5-lipoxygenase (ALOX5/5LO) in a calcium-independent manner. Binds to F-actin with a stoichiometry of 1:2.

It localises to the cytoplasm. Its subcellular location is the cytoskeleton. It is found in the nucleus. Its function is as follows. Binds to F-actin in a calcium-independent manner. Has no direct effect on actin depolymerization. Acts as a chaperone for ALOX5 (5LO), influencing both its stability and activity in leukotrienes synthesis. This is Coactosin-like protein (COTL1) from Bos taurus (Bovine).